A 56-amino-acid polypeptide reads, in one-letter code: Small ribosomal subunit protein uS14 (56 aa).

Residues Cys21, Cys24, Cys39, and Cys42 each contribute to the Zn(2+) site.

Belongs to the universal ribosomal protein uS14 family. As to quaternary structure, component of the 40S small ribosomal subunit. The cofactor is Zn(2+).

It is found in the cytoplasm. Its subcellular location is the cytosol. It localises to the rough endoplasmic reticulum. This chain is Small ribosomal subunit protein uS14 (RpS29), found in Drosophila melanogaster (Fruit fly).